The chain runs to 393 residues: 4-hydroxyphenylpyruvate dioxygenase (393 aa).

Thr-2 is modified (N-acetylthreonine). VOC domains lie at 18–149 (HFHS…LVEK) and 180–338 (IIDH…IFTK). Lys-132 bears the N6-succinyllysine mark. Fe cation is bound at residue His-183. Residues Ser-211, Ser-226, and Ser-250 each carry the phosphoserine modification. The Fe cation site is built by His-266 and Glu-349.

The protein belongs to the 4HPPD family. Homodimer. Fe cation is required as a cofactor.

The protein localises to the cytoplasm. Its subcellular location is the endoplasmic reticulum membrane. It localises to the golgi apparatus membrane. The enzyme catalyses 3-(4-hydroxyphenyl)pyruvate + O2 = homogentisate + CO2. Its pathway is amino-acid degradation; L-phenylalanine degradation; acetoacetate and fumarate from L-phenylalanine: step 3/6. In terms of biological role, catalyzes the conversion of 4-hydroxyphenylpyruvic acid to homogentisic acid, one of the steps in tyrosine catabolism. This is 4-hydroxyphenylpyruvate dioxygenase (Hpd) from Rattus norvegicus (Rat).